Consider the following 188-residue polypeptide: Elongation factor P (188 aa).

Belongs to the elongation factor P family.

Its subcellular location is the cytoplasm. It functions in the pathway protein biosynthesis; polypeptide chain elongation. Functionally, involved in peptide bond synthesis. Stimulates efficient translation and peptide-bond synthesis on native or reconstituted 70S ribosomes in vitro. Probably functions indirectly by altering the affinity of the ribosome for aminoacyl-tRNA, thus increasing their reactivity as acceptors for peptidyl transferase. This is Elongation factor P from Wolbachia sp. subsp. Drosophila simulans (strain wRi).